Reading from the N-terminus, the 404-residue chain is Probable sugar efflux transporter (404 aa).

Helical transmembrane passes span 15–35, 51–71, 85–105, 109–129, 137–157, 168–188, 209–229, 245–265, 276–296, 299–319, 333–353, and 363–383; these read VITFALAGFVFNTTEFIPVAL, GLIITVYAWVVSLMSLPFMLL, LVLFILSHLLSVIAWDFWVLV, IGVALTHSIFWAITASLVIRV, QAIGLLAIGCSLAMILGLPLG, ATFAIIALIAIGILCLFYQLL, PLLLGLYALTMIIISAHFTAY, SMATFVLFVFGLSGITASLLF, FILFSMGLLTATLLLLFIASQ, WTMFLLTFFWGIGIAGIGLGL, VAMAIYSGIYNIGIGAGALLG, and AYIGVAGALFAVFGLVLFILV.

The protein belongs to the major facilitator superfamily. SotB (TC 2.A.1.2) family.

Its subcellular location is the cell inner membrane. Functionally, involved in the efflux of sugars. The physiological role may be the reduction of the intracellular concentration of toxic sugars or sugar metabolites. This chain is Probable sugar efflux transporter, found in Pasteurella multocida (strain Pm70).